We begin with the raw amino-acid sequence, 232 residues long: dTTP/UTP pyrophosphatase (232 aa).

The active-site Proton acceptor is Asp-103.

Belongs to the Maf family. YhdE subfamily. A divalent metal cation is required as a cofactor.

It localises to the cytoplasm. It carries out the reaction dTTP + H2O = dTMP + diphosphate + H(+). The enzyme catalyses UTP + H2O = UMP + diphosphate + H(+). Its function is as follows. Nucleoside triphosphate pyrophosphatase that hydrolyzes dTTP and UTP. May have a dual role in cell division arrest and in preventing the incorporation of modified nucleotides into cellular nucleic acids. The sequence is that of dTTP/UTP pyrophosphatase from Bartonella henselae (strain ATCC 49882 / DSM 28221 / CCUG 30454 / Houston 1) (Rochalimaea henselae).